A 434-amino-acid chain; its full sequence is Histidinol dehydrogenase (434 aa).

Residues Tyr130, Gln188, and Asn211 each coordinate NAD(+). Substrate is bound by residues Ser237, Gln259, and His262. Residues Gln259 and His262 each contribute to the Zn(2+) site. Catalysis depends on proton acceptor residues Glu326 and His327. The substrate site is built by His327, Asp360, Glu414, and His419. Zn(2+) is bound at residue Asp360. His419 is a Zn(2+) binding site.

Belongs to the histidinol dehydrogenase family. Homodimer. It depends on Zn(2+) as a cofactor.

It carries out the reaction L-histidinol + 2 NAD(+) + H2O = L-histidine + 2 NADH + 3 H(+). It functions in the pathway amino-acid biosynthesis; L-histidine biosynthesis; L-histidine from 5-phospho-alpha-D-ribose 1-diphosphate: step 9/9. In terms of biological role, catalyzes the sequential NAD-dependent oxidations of L-histidinol to L-histidinaldehyde and then to L-histidine. The chain is Histidinol dehydrogenase from Shigella flexneri.